A 557-amino-acid polypeptide reads, in one-letter code: Inositol-3-phosphate synthase 1 (557 aa).

NAD(+) is bound by residues glycine 67, glycine 68, asparagine 69, asparagine 70, aspartate 141, serine 177, valine 178, glutamine 188, arginine 191, threonine 228, alanine 229, asparagine 230, threonine 231, glycine 278, serine 279, aspartate 303, serine 306, asparagine 337, asparagine 338, aspartate 339, and lysine 352. Position 279 is a phosphoserine (serine 279). At serine 357 the chain carries Phosphoserine. Positions 390, 391, 419, and 420 each coordinate NAD(+). The residue at position 523 (serine 523) is a Phosphoserine. The disordered stretch occupies residues 527–557 (CKKGSAPTAPNGCTGDANGHSQAEAPQMPTT).

It belongs to the myo-inositol 1-phosphate synthase family. It depends on NAD(+) as a cofactor. As to expression, expressed in testis (at protein level).

The protein localises to the cytoplasm. The enzyme catalyses D-glucose 6-phosphate = 1D-myo-inositol 3-phosphate. It functions in the pathway polyol metabolism; myo-inositol biosynthesis; myo-inositol from D-glucose 6-phosphate: step 1/2. Functionally, key enzyme in myo-inositol biosynthesis pathway that catalyzes the conversion of glucose 6-phosphate to 1-myo-inositol 1-phosphate in a NAD-dependent manner. Rate-limiting enzyme in the synthesis of all inositol-containing compounds. The protein is Inositol-3-phosphate synthase 1 (ISYNA1) of Bos taurus (Bovine).